The sequence spans 1123 residues: Translation initiation factor IF-2 (1123 aa).

2 disordered regions span residues 52–452 (LLKA…KVHI) and 480–512 (LARPSKPKSQQKAAPKPVAAMRKRRKETTRQRQ). 3 stretches are compositionally biased toward low complexity: residues 54–73 (KAGSAPRAAASPSKPAPGKA), 94–113 (KPAASSPPAAPAAPTKAKSP), and 121–133 (AAPSRPAAPKASA). The segment covering 170-187 (PPSPPARPVPQQPSPPSA) has biased composition (pro residues). Low complexity predominate over residues 193–206 (APIRRAAPNDAPRP). Pro residues-rich tracts occupy residues 207 to 217 (ANAPPSRPQPK) and 258 to 268 (SPRPAVSPRPS). The span at 285-304 (RPGAPTRPGTGAGRPSRPGG) shows a compositional bias: low complexity. Positions 320-339 (GNRGEGGRPPGGARPAGGGN) are enriched in gly residues. Residues 388–403 (ATPPVSRPTATPPSPA) are compositionally biased toward pro residues. Gly residues predominate over residues 412-422 (FRPGAGPGGQR). Residues 425–439 (GRPDWDDSAKLDALR) show a composition bias toward basic and acidic residues. The segment covering 486–499 (PKSQQKAAPKPVAA) has biased composition (low complexity). A compositionally biased stretch (basic residues) spans 500-512 (MRKRRKETTRQRQ). Positions 615 to 787 (RRPPVVTVMG…LLLVTEVEDL (173 aa)) constitute a tr-type G domain. The segment at 624–631 (GHVDHGKT) is G1. 624–631 (GHVDHGKT) is a binding site for GTP. A G2 region spans residues 649 to 653 (GITQH). The segment at 674–677 (DTPG) is G3. GTP-binding positions include 674–678 (DTPGH) and 728–731 (NKID). Residues 728–731 (NKID) form a G4 region. Residues 764–766 (SAI) form a G5 region.

It belongs to the TRAFAC class translation factor GTPase superfamily. Classic translation factor GTPase family. IF-2 subfamily.

The protein localises to the cytoplasm. One of the essential components for the initiation of protein synthesis. Protects formylmethionyl-tRNA from spontaneous hydrolysis and promotes its binding to the 30S ribosomal subunits. Also involved in the hydrolysis of GTP during the formation of the 70S ribosomal complex. This Synechococcus sp. (strain WH7803) protein is Translation initiation factor IF-2.